The chain runs to 575 residues: NEDD4-binding protein 2-like 2 (575 aa).

Basic and acidic residues-rich tracts occupy residues 69–87, 129–142, and 149–167; these read QEDK…EMPG, PPEK…KSET, and DSKR…KLEM. 2 disordered regions span residues 69–169 and 555–575; these read QEDK…EMDT and GEQR…ADDY. Residues 162–194 are a coiled coil; sequence SKKLEMDTELSQFYKEIEELENENEASQGSCTE. Positions 564–575 are enriched in polar residues; it reads GSHSQVSIADDY.

In Mus musculus (Mouse), this protein is NEDD4-binding protein 2-like 2 (N4bp2l2).